We begin with the raw amino-acid sequence, 337 residues long: Probable cytosolic iron-sulfur protein assembly protein 1 (337 aa).

7 WD repeats span residues 11–50 (LHND…ENLL), 57–96 (VHKK…LEEG), 109–148 (GHEN…EEYE), 155–194 (EHSQ…WECA), 199–240 (GHEG…EDDQ), 252–290 (AHRS…SEVS), and 301–337 (AHTV…NYQD).

The protein belongs to the WD repeat CIA1 family. Interacts with NAR1.

It is found in the cytoplasm. The protein localises to the nucleus. Essential component of the cytosolic iron-sulfur (Fe/S) protein assembly machinery. Required for the maturation of extramitochondrial Fe/S proteins. The chain is Probable cytosolic iron-sulfur protein assembly protein 1 from Candida glabrata (strain ATCC 2001 / BCRC 20586 / JCM 3761 / NBRC 0622 / NRRL Y-65 / CBS 138) (Yeast).